We begin with the raw amino-acid sequence, 67 residues long: DNA gyrase inhibitor YacG (67 aa).

The Zn(2+) site is built by C10, C13, C29, and C33. Basic and acidic residues predominate over residues 44–57; it reads EEKRIPSSGDRSDT. Residues 44–67 are disordered; the sequence is EEKRIPSSGDRSDTDGWSEEENQP.

This sequence belongs to the DNA gyrase inhibitor YacG family. In terms of assembly, interacts with GyrB. The cofactor is Zn(2+).

Inhibits all the catalytic activities of DNA gyrase by preventing its interaction with DNA. Acts by binding directly to the C-terminal domain of GyrB, which probably disrupts DNA binding by the gyrase. The chain is DNA gyrase inhibitor YacG from Cronobacter sakazakii (strain ATCC BAA-894) (Enterobacter sakazakii).